A 1407-amino-acid chain; its full sequence is Clustered mitochondria protein (1407 aa).

Residues 1–12 (MAGKSNKSKAKR) are compositionally biased toward basic residues. 2 disordered regions span residues 1-36 (MAGKSNKSKAKRAAQSTTTNSTTDVKSDAPAPPVAA) and 83-103 (IPKADESESQVENNDAQPKQG). Over residues 14-24 (AQSTTTNSTTD) the composition is skewed to polar residues. Residues 384-670 (PDHKRDAARA…RVTPRDANYT (287 aa)) enclose the Clu domain. Residues 724 to 760 (IDGEANGASNSDQKSISDKQNTTAEDYAAGSSESSKS) form a disordered region. Polar residues predominate over residues 730-747 (GASNSDQKSISDKQNTTA). TPR repeat units lie at residues 1025 to 1058 (AKDLVEMGKVQLAEGMLSESYTFFSEAFSILQQV), 1067 to 1100 (ANCCRYLAMVLYHAGDMAGAIMQQHKELIINERC), 1109 to 1142 (AHSYGNMALFYHGLNQTELALQNMGRALLLLGLS), 1151 to 1184 (AATFINVAMMYQDMGKMDTALRYLQEALKKNERL), and 1193 to 1226 (AVCYHALAIAFNCMGAFKLSHQHEKKTYDILVKQ). The disordered stretch occupies residues 1358–1407 (VSSEKGGENGEAKVQEKKESSENGKTENLAPAGLGAGLTSLDKKKQKAKK). The span at 1362–1382 (KGGENGEAKVQEKKESSENGK) shows a compositional bias: basic and acidic residues.

It belongs to the CLU family.

The protein localises to the cytoplasm. MRNA-binding protein involved in proper cytoplasmic distribution of mitochondria. Together with REC2, REC3 and FMT/CLU, contributes to the establishment of the cellular volume devoted to the chloroplast compartment. This Arabidopsis thaliana (Mouse-ear cress) protein is Clustered mitochondria protein.